A 368-amino-acid chain; its full sequence is DNA integrity scanning protein DisA (368 aa).

Positions 15-153 (DERLRATLAA…DGRRHVLDEP (139 aa)) constitute a DAC domain. Residues G82, L100, and 113–117 (TRHRS) each bind ATP. Positions 101–121 (QPDPSIPTNESGTRHRSAERT) are disordered. Positions 112 to 121 (GTRHRSAERT) are enriched in basic and acidic residues.

This sequence belongs to the DisA family. Homooctamer. Mg(2+) serves as cofactor.

It carries out the reaction 2 ATP = 3',3'-c-di-AMP + 2 diphosphate. Participates in a DNA-damage check-point. DisA forms globular foci that rapidly scan along the chromosomes searching for lesions. In terms of biological role, also has diadenylate cyclase activity, catalyzing the condensation of 2 ATP molecules into cyclic di-AMP (c-di-AMP). c-di-AMP likely acts as a signaling molecule that may couple DNA integrity with a cellular process. The chain is DNA integrity scanning protein DisA from Acidothermus cellulolyticus (strain ATCC 43068 / DSM 8971 / 11B).